The sequence spans 323 residues: MSKHYFDPRLKIFSLNSNRPLAEKIADAVGVELGKCSVTQFSDGEIQVNIEESIRGAHVYVIQSTSSPVNDNLMELLIMIDALKRASAKTINVVMPYYGYARQDRKARAREPITAKLVANMIEKAGATRMLTLDLHAVQIQGFFDIPVDHLMGAPLIADYFIEHGIQGDDVVVVSPDHGGVTRARKLAEFLKAPIAIIDKRRPKANVAEVMNIIGHVEGKTCVLIDDMIDTAGTISLAANALKEAGAKDVYASCTHPVLSGPALQRIEDSAIERLVVTDSIYLSDDRKIVKIDEVSVGELIGDAIKRIHENKPVSPLFETKNK.

ATP is bound by residues 43 to 45 (DGE) and 102 to 103 (RQ). Histidine 136 and aspartate 177 together coordinate Mg(2+). The active site involves lysine 200. Residues arginine 202, aspartate 226, and 230–234 (DTAGT) each bind D-ribose 5-phosphate.

Belongs to the ribose-phosphate pyrophosphokinase family. Class I subfamily. In terms of assembly, homohexamer. The cofactor is Mg(2+).

It is found in the cytoplasm. It catalyses the reaction D-ribose 5-phosphate + ATP = 5-phospho-alpha-D-ribose 1-diphosphate + AMP + H(+). The protein operates within metabolic intermediate biosynthesis; 5-phospho-alpha-D-ribose 1-diphosphate biosynthesis; 5-phospho-alpha-D-ribose 1-diphosphate from D-ribose 5-phosphate (route I): step 1/1. In terms of biological role, involved in the biosynthesis of the central metabolite phospho-alpha-D-ribosyl-1-pyrophosphate (PRPP) via the transfer of pyrophosphoryl group from ATP to 1-hydroxyl of ribose-5-phosphate (Rib-5-P). This chain is Ribose-phosphate pyrophosphokinase 2, found in Enterococcus faecalis (strain ATCC 700802 / V583).